Here is a 198-residue protein sequence, read N- to C-terminus: Leucyl/phenylalanyl-tRNA--protein transferase (198 aa).

It belongs to the L/F-transferase family.

The protein resides in the cytoplasm. The catalysed reaction is N-terminal L-lysyl-[protein] + L-leucyl-tRNA(Leu) = N-terminal L-leucyl-L-lysyl-[protein] + tRNA(Leu) + H(+). The enzyme catalyses N-terminal L-arginyl-[protein] + L-leucyl-tRNA(Leu) = N-terminal L-leucyl-L-arginyl-[protein] + tRNA(Leu) + H(+). It catalyses the reaction L-phenylalanyl-tRNA(Phe) + an N-terminal L-alpha-aminoacyl-[protein] = an N-terminal L-phenylalanyl-L-alpha-aminoacyl-[protein] + tRNA(Phe). Functionally, functions in the N-end rule pathway of protein degradation where it conjugates Leu, Phe and, less efficiently, Met from aminoacyl-tRNAs to the N-termini of proteins containing an N-terminal arginine or lysine. This chain is Leucyl/phenylalanyl-tRNA--protein transferase, found in Synechocystis sp. (strain ATCC 27184 / PCC 6803 / Kazusa).